The chain runs to 364 residues: tRNA 2-selenouridine synthase (364 aa).

Residues 14 to 137 (LIADTPIIDV…LRQTAIQATI (124 aa)) enclose the Rhodanese domain. The active-site S-selanylcysteine intermediate is the cysteine 97.

The protein belongs to the SelU family. Monomer.

The enzyme catalyses 5-methylaminomethyl-2-thiouridine(34) in tRNA + selenophosphate + (2E)-geranyl diphosphate + H2O + H(+) = 5-methylaminomethyl-2-selenouridine(34) in tRNA + (2E)-thiogeraniol + phosphate + diphosphate. It catalyses the reaction 5-methylaminomethyl-2-thiouridine(34) in tRNA + (2E)-geranyl diphosphate = 5-methylaminomethyl-S-(2E)-geranyl-thiouridine(34) in tRNA + diphosphate. It carries out the reaction 5-methylaminomethyl-S-(2E)-geranyl-thiouridine(34) in tRNA + selenophosphate + H(+) = 5-methylaminomethyl-2-(Se-phospho)selenouridine(34) in tRNA + (2E)-thiogeraniol. The catalysed reaction is 5-methylaminomethyl-2-(Se-phospho)selenouridine(34) in tRNA + H2O = 5-methylaminomethyl-2-selenouridine(34) in tRNA + phosphate. In terms of biological role, involved in the post-transcriptional modification of the uridine at the wobble position (U34) of tRNA(Lys), tRNA(Glu) and tRNA(Gln). Catalyzes the conversion of 2-thiouridine (S2U-RNA) to 2-selenouridine (Se2U-RNA). Acts in a two-step process involving geranylation of 2-thiouridine (S2U) to S-geranyl-2-thiouridine (geS2U) and subsequent selenation of the latter derivative to 2-selenouridine (Se2U) in the tRNA chain. The chain is tRNA 2-selenouridine synthase from Escherichia coli O127:H6 (strain E2348/69 / EPEC).